The primary structure comprises 190 residues: UPF0316 protein Mboo_0605 (190 aa).

Helical transmembrane passes span 3-23 (IGTF…RIAE), 41-61 (LAAY…GLVL), and 67-87 (FWNL…GMEI).

Belongs to the UPF0316 family.

Its subcellular location is the cell membrane. This chain is UPF0316 protein Mboo_0605, found in Methanoregula boonei (strain DSM 21154 / JCM 14090 / 6A8).